The chain runs to 148 residues: Fluoride-specific ion channel FluC 2 (148 aa).

4 helical membrane passes run L23 to V43, G61 to F81, F92 to L112, and L120 to G140. Na(+)-binding residues include G99 and T102.

The protein belongs to the fluoride channel Fluc/FEX (TC 1.A.43) family.

Its subcellular location is the cell membrane. It carries out the reaction fluoride(in) = fluoride(out). Na(+) is not transported, but it plays an essential structural role and its presence is essential for fluoride channel function. Its function is as follows. Fluoride-specific ion channel. Important for reducing fluoride concentration in the cell, thus reducing its toxicity. The polypeptide is Fluoride-specific ion channel FluC 2 (Rubrobacter xylanophilus (strain DSM 9941 / JCM 11954 / NBRC 16129 / PRD-1)).